We begin with the raw amino-acid sequence, 140 residues long: MIDISKIREALPHRYPILLVDRVLEVSDDEIVAIKNVTINEPFFNGHFPQYPVMPGVLIMEALAQTAGVLELSKKENTGKLVFYAGMDKVKFKKQVVPGDQLVMTAKFVKRRGTIAVVEAKAEVDGKLAASGTLTFAIGN.

His47 is a catalytic residue.

This sequence belongs to the thioester dehydratase family. FabZ subfamily.

The protein resides in the cytoplasm. The enzyme catalyses a (3R)-hydroxyacyl-[ACP] = a (2E)-enoyl-[ACP] + H2O. Involved in unsaturated fatty acids biosynthesis. Catalyzes the dehydration of short chain beta-hydroxyacyl-ACPs and long chain saturated and unsaturated beta-hydroxyacyl-ACPs. The protein is 3-hydroxyacyl-[acyl-carrier-protein] dehydratase FabZ of Streptococcus mutans serotype c (strain ATCC 700610 / UA159).